The following is a 428-amino-acid chain: Stabilizer of axonemal microtubules 4 (428 aa).

The segment at 201-231 (AKEETGFTEESNKNPIVFQPPSQALPGDPVL) is disordered.

Microtubule inner protein component of sperm flagellar doublet microtubules. Interacts with PPP1CA.

The protein localises to the cell projection. It localises to the cilium. The protein resides in the cytoplasm. Its subcellular location is the cytoskeleton. It is found in the flagellum axoneme. This is Stabilizer of axonemal microtubules 4 from Bos taurus (Bovine).